The primary structure comprises 671 residues: MKFAEHLTAHITPEWRKQYINYEEMKAMLYAAIEQSPSAELVEREMVTRYFAKFDEEFFHYCDKELAKINTFYSEKMAEATRKYGSLRSELTEALEMGHPKKLPAWKRRTPLGKKNVPARKIQDLKLAFSEFYLGLILLQNYQNLNFTGFRKILKKHDKLLSVDYGARWRTDHVEAAHFYTNKDIDRLIQETEQAVTQDIEGGDRQRAMKRLRVPPLGEQQSPWTTFKVGLFSGAFVVLFITVVIAAMFYGFGENWRAGMRMFRAPFLIIECLFLWGVNVYGWRSSGVNHVLIFELDPRNHLSEQNIMEVASVFGVIWACCVLSYIFCDPLGIPQYAAPLCLYTLMAAFLLNPTKTFHHEARFWAIRILIRVIMAPFCFVNFADFWLADQLNSMVPAFLDIPFLICFFGRSPTWHKAGKAASHCVEYVSLLHPIVAIMPAYFRFAQCIRRYRDTKESFPHLVNAAKYATSFFVVIFAHKYHTTTDTYPLSKENPWFYCWITAAIFSSCYAYTWDIKMDWGLFDSKAGDNRFLREEIVYSSTWFYYFGIIEDLILRFSWTLSMSLIEAGYIEGDVMMTILSPLEVFRRFIWNYFRLENEHLNNVGKFRAVRDISVAPMDCSDQTTILRMMDETDGVLNRRRGKAAGGKSATKKNKQEQRLLLQGESIEDLCS.

The segment at 1–193 (MKFAEHLTAH…DIDRLIQETE (193 aa)) is important for promoting lysosomal/autophagosomal degradation of PXo bodies following inorganic phosphate (Pi) starvation. At 1–228 (MKFAEHLTAH…EQQSPWTTFK (228 aa)) the chain is on the cytoplasmic side. Positions 2–218 (KFAEHLTAHI…MKRLRVPPLG (217 aa)) constitute an SPX domain. The interval 152–159 (KILKKHDK) is important for inositol polyphosphate binding. Residues 229–253 (VGLFSGAFVVLFITVVIAAMFYGFG) form a helical membrane-spanning segment. The Extracellular segment spans residues 254-255 (EN). The helical transmembrane segment at 256–287 (WRAGMRMFRAPFLIIECLFLWGVNVYGWRSSG) threads the bilayer. Topologically, residues 288–300 (VNHVLIFELDPRN) are cytoplasmic. The helical transmembrane segment at 301 to 328 (HLSEQNIMEVASVFGVIWACCVLSYIFC) threads the bilayer. The Extracellular segment spans residues 329–334 (DPLGIP). The helical transmembrane segment at 335 to 356 (QYAAPLCLYTLMAAFLLNPTKT) threads the bilayer. Residues 357–374 (FHHEARFWAIRILIRVIM) constitute an intramembrane region (helical). Over 375-379 (APFCF) the chain is Cytoplasmic. The discontinuously helical transmembrane segment at 380 to 413 (VNFADFWLADQLNSMVPAFLDIPFLICFFGRSPT) threads the bilayer. Residues Asp389 and Asn392 each contribute to the phosphate site. Over 414–415 (WH) the chain is Extracellular. Residues 416 to 455 (KAGKAASHCVEYVSLLHPIVAIMPAYFRFAQCIRRYRDTK) traverse the membrane as a discontinuously helical segment. Residues 423 to 627 (HCVEYVSLLH…DCSDQTTILR (205 aa)) enclose the EXS domain. Residue Glu456 is a topological domain, cytoplasmic. The helical transmembrane segment at 457–488 (SFPHLVNAAKYATSFFVVIFAHKYHTTTDTYP) threads the bilayer. Positions 466 and 467 each coordinate phosphate. Residues 489–491 (LSK) are Extracellular-facing. Residues 492 to 519 (ENPWFYCWITAAIFSSCYAYTWDIKMDW) traverse the membrane as a helical segment. Residues 520–538 (GLFDSKAGDNRFLREEIVY) lie on the Cytoplasmic side of the membrane. Residues 539–570 (SSTWFYYFGIIEDLILRFSWTLSMSLIEAGYI) traverse the membrane as a discontinuously helical segment. Arg555, Arg586, and Arg587 together coordinate phosphate. Residues 571-609 (EGDVMMTILSPLEVFRRFIWNYFRLENEHLNNVGKFRAV) form a helical membrane-spanning segment. The Cytoplasmic segment spans residues 610–671 (RDISVAPMDC…QGESIEDLCS (62 aa)).

The protein belongs to the SYG1 (TC 2.A.94) family. As to quaternary structure, homodimer. Interacts with the FAR/SIN/STRIPAK complex members Cka and Pp2A-29B. Detected in PXo bodies found in the enterocytes and progenitors of the midgut and in the hindgut, but rarely occur in the Malpighian tubules, crop, brain, muscles and germlines (at protein level).

Its subcellular location is the membrane. The enzyme catalyses phosphate(in) = phosphate(out). Functionally, inorganic ion transporter that mediates phosphate ion export across the cell membrane. Plays a major role in phosphate homeostasis, preventing intracellular phosphate accumulation and possible calcium phosphate precipitation, ultimately preserving calcium signaling. Binds inositol hexakisphosphate (Ins6P) and similar inositol polyphosphates, such as 5-diphospho-inositol pentakisphosphate (5-InsP7), which are important intracellular signaling molecules involved in regulation of phosphate flux. In enterocytes and differentiating progenitors of the gut, promotes the biogenesis and maintenance of organelles called PXo bodies that store intracellular inorganic phosphate (Pi), and also regulates Cka-JNK mediated tissue homeostasis in response to Pi availability in these tissues. Under conditions of adequate Pi, transports Pi into PXo bodies which convert and store the Pi in the form of phospholipids. It also inhibits Cka at the post-transcriptional level to prevent Cka-bsk/JNK mediated cell proliferation. Upon Pi starvation, Pxo expression is down-regulated resulting in the PXo bodies decreasing in phospholipid content until they undergo lysosomal/autophagosomal degradation and release the stored Pi back into the cytosol for use by the cell. Decrease in Pxo expression also activates the Cka protein, which moves to the nucleus to activate bsk/JNK which then induces nearby progenitor cells to proliferate and form new absorptive cells, probably helping the organism to cope with the nutrient deficiency by maximizing absorption of dietary Pi. The chain is Solute carrier family 53 member 1 from Drosophila melanogaster (Fruit fly).